Here is a 488-residue protein sequence, read N- to C-terminus: BTB/POZ domain-containing protein 1 (488 aa).

Low complexity predominate over residues 1–19 (MASLGSAAAGEPATGAEAE). Positions 1–42 (MASLGSAAAGEPATGAEAEPGPPAPPPPPPPPPAPSPSALGP) are disordered. Pro residues predominate over residues 20 to 36 (PGPPAPPPPPPPPPAPS). The region spanning 75-151 (SDVRFVLGKG…LYSDEVQIGP (77 aa)) is the BTB domain. Arg85 carries the post-translational modification Omega-N-methylarginine. In terms of domain architecture, BACK spans 190 to 290 (LTQARLFDEP…IRFPLMTIEE (101 aa)).

As to quaternary structure, interacts (via C-terminus) with TOP1. Interacts with TRIM5 isoform Delta. Interacts with CUL3. Strongly expressed in heart and skeletal muscle. Weakly expressed in myoblast C2C12 cells, but strongly up-regulated upon their differentiation into myotubes.

Its subcellular location is the cytoplasm. It functions in the pathway protein modification; protein ubiquitination. Functionally, probable substrate-specific adapter of an E3 ubiquitin-protein ligase complex which mediates the ubiquitination and subsequent proteasomal degradation of target proteins. Seems to regulate expression levels and/or subnuclear distribution of TOP1, via an unknown mechanism. May play a role in mesenchymal differentiation where it promotes myogenic differentiation and suppresses adipogenesis. The sequence is that of BTB/POZ domain-containing protein 1 (Btbd1) from Mus musculus (Mouse).